Reading from the N-terminus, the 309-residue chain is tRNA pseudouridine synthase B (309 aa).

The Nucleophile role is filled by Asp52.

This sequence belongs to the pseudouridine synthase TruB family. Type 1 subfamily.

The enzyme catalyses uridine(55) in tRNA = pseudouridine(55) in tRNA. Functionally, responsible for synthesis of pseudouridine from uracil-55 in the psi GC loop of transfer RNAs. The sequence is that of tRNA pseudouridine synthase B from Leptospira interrogans serogroup Icterohaemorrhagiae serovar Lai (strain 56601).